We begin with the raw amino-acid sequence, 562 residues long: Ycf55-like protein (562 aa).

One can recognise a Response regulatory domain in the interval 7-125 (TIVIVDEDPV…DLVTGLKQVH (119 aa)).

It belongs to the ycf55 family.

The sequence is that of Ycf55-like protein from Synechocystis sp. (strain ATCC 27184 / PCC 6803 / Kazusa).